A 489-amino-acid chain; its full sequence is Glycogen synthase (489 aa).

Residue lysine 15 participates in ADP-alpha-D-glucose binding.

The protein belongs to the glycosyltransferase 1 family. Bacterial/plant glycogen synthase subfamily.

It carries out the reaction [(1-&gt;4)-alpha-D-glucosyl](n) + ADP-alpha-D-glucose = [(1-&gt;4)-alpha-D-glucosyl](n+1) + ADP + H(+). The protein operates within glycan biosynthesis; glycogen biosynthesis. Synthesizes alpha-1,4-glucan chains using ADP-glucose. In Francisella tularensis subsp. holarctica (strain FTNF002-00 / FTA), this protein is Glycogen synthase.